A 218-amino-acid chain; its full sequence is Protein-L-isoaspartate O-methyltransferase (218 aa).

Serine 63 is a catalytic residue.

The protein belongs to the methyltransferase superfamily. L-isoaspartyl/D-aspartyl protein methyltransferase family.

It localises to the cytoplasm. The catalysed reaction is [protein]-L-isoaspartate + S-adenosyl-L-methionine = [protein]-L-isoaspartate alpha-methyl ester + S-adenosyl-L-homocysteine. Its function is as follows. Catalyzes the methyl esterification of L-isoaspartyl residues in peptides and proteins that result from spontaneous decomposition of normal L-aspartyl and L-asparaginyl residues. It plays a role in the repair and/or degradation of damaged proteins. The protein is Protein-L-isoaspartate O-methyltransferase of Syntrophus aciditrophicus (strain SB).